The following is a 267-amino-acid chain: Tryptophan synthase alpha chain (267 aa).

Residues Glu-49 and Asp-60 each act as proton acceptor in the active site.

It belongs to the TrpA family. As to quaternary structure, tetramer of two alpha and two beta chains.

It carries out the reaction (1S,2R)-1-C-(indol-3-yl)glycerol 3-phosphate + L-serine = D-glyceraldehyde 3-phosphate + L-tryptophan + H2O. The protein operates within amino-acid biosynthesis; L-tryptophan biosynthesis; L-tryptophan from chorismate: step 5/5. Functionally, the alpha subunit is responsible for the aldol cleavage of indoleglycerol phosphate to indole and glyceraldehyde 3-phosphate. In Solibacter usitatus (strain Ellin6076), this protein is Tryptophan synthase alpha chain.